The chain runs to 360 residues: Phospho-N-acetylmuramoyl-pentapeptide-transferase (360 aa).

The next 10 membrane-spanning stretches (helical) occupy residues 18-38, 73-93, 94-114, 134-154, 168-188, 199-219, 239-259, 263-283, 288-308, and 338-358; these read VFSY…FISL, TMGG…WADL, SNIY…VGFV, YFWQ…IAQG, LLPQ…VGTS, GLAI…AYVT, LVIV…FNTY, VFMG…IAIL, LVLF…ILQV, and VIVR…ATLK.

The protein belongs to the glycosyltransferase 4 family. MraY subfamily. It depends on Mg(2+) as a cofactor.

It localises to the cell inner membrane. It carries out the reaction UDP-N-acetyl-alpha-D-muramoyl-L-alanyl-gamma-D-glutamyl-meso-2,6-diaminopimeloyl-D-alanyl-D-alanine + di-trans,octa-cis-undecaprenyl phosphate = di-trans,octa-cis-undecaprenyl diphospho-N-acetyl-alpha-D-muramoyl-L-alanyl-D-glutamyl-meso-2,6-diaminopimeloyl-D-alanyl-D-alanine + UMP. The protein operates within cell wall biogenesis; peptidoglycan biosynthesis. Functionally, catalyzes the initial step of the lipid cycle reactions in the biosynthesis of the cell wall peptidoglycan: transfers peptidoglycan precursor phospho-MurNAc-pentapeptide from UDP-MurNAc-pentapeptide onto the lipid carrier undecaprenyl phosphate, yielding undecaprenyl-pyrophosphoryl-MurNAc-pentapeptide, known as lipid I. The polypeptide is Phospho-N-acetylmuramoyl-pentapeptide-transferase (Colwellia psychrerythraea (strain 34H / ATCC BAA-681) (Vibrio psychroerythus)).